The primary structure comprises 322 residues: Malate dehydrogenase (322 aa).

Residues 10–15 (GSGQIG) and D34 contribute to the NAD(+) site. Residues R83 and R89 each contribute to the substrate site. Residues N96 and 119–121 (ITN) contribute to the NAD(+) site. Substrate contacts are provided by N121 and R152. H176 functions as the Proton acceptor in the catalytic mechanism.

This sequence belongs to the LDH/MDH superfamily. MDH type 3 family.

The catalysed reaction is (S)-malate + NAD(+) = oxaloacetate + NADH + H(+). Functionally, catalyzes the reversible oxidation of malate to oxaloacetate. This Nitrobacter winogradskyi (strain ATCC 25391 / DSM 10237 / CIP 104748 / NCIMB 11846 / Nb-255) protein is Malate dehydrogenase.